We begin with the raw amino-acid sequence, 214 residues long: Small ribosomal subunit protein uS5 (214 aa).

An S5 DRBM domain is found at 55 to 118; that stretch reads LKYERLDVGI…RNAKLNITPV (64 aa).

The protein belongs to the universal ribosomal protein uS5 family. As to quaternary structure, part of the 30S ribosomal subunit. Contacts protein S4.

With S4 and S12 plays an important role in translational accuracy. This chain is Small ribosomal subunit protein uS5, found in Staphylothermus marinus (strain ATCC 43588 / DSM 3639 / JCM 9404 / F1).